The following is a 78-amino-acid chain: Small ribosomal subunit protein bS18 (78 aa).

This sequence belongs to the bacterial ribosomal protein bS18 family. Part of the 30S ribosomal subunit. Forms a tight heterodimer with protein bS6.

Functionally, binds as a heterodimer with protein bS6 to the central domain of the 16S rRNA, where it helps stabilize the platform of the 30S subunit. In Limosilactobacillus reuteri (strain DSM 20016) (Lactobacillus reuteri), this protein is Small ribosomal subunit protein bS18.